The chain runs to 197 residues: MTIAAGSQDDKQRRAALWLLACLGVLAIQVLVQHLMGRLWICECGYIKLWEGVVKSSGNSQHLSDWYTPSHVIHGFLFYGLGHLLMRGKPWSARLLLATVIESAWEIAENTPMVINRYRAATISLDYFGDSILNSAMDTLAMAVGFLIASRLPVAATVAIAIVLELFTGYMVRDNLTLNVLMLVWPLDAVKAWQAGV.

The next 2 membrane-spanning stretches (helical) occupy residues 16 to 36 (ALWL…QHLM) and 152 to 172 (LPVA…GYMV).

Belongs to the UPF0314 family.

It is found in the cell membrane. The sequence is that of UPF0314 protein R03235 from Rhizobium meliloti (strain 1021) (Ensifer meliloti).